The primary structure comprises 372 residues: Alanine dehydrogenase 2 (372 aa).

The active site involves H95. 169–199 (KVTIIGGGQAGTNAAKIALGLGADVTILDVN) lines the NAD(+) pocket.

Belongs to the AlaDH/PNT family.

It catalyses the reaction L-alanine + NAD(+) + H2O = pyruvate + NH4(+) + NADH + H(+). It functions in the pathway amino-acid degradation; L-alanine degradation via dehydrogenase pathway; NH(3) and pyruvate from L-alanine: step 1/1. May play a role in cell wall synthesis as L-alanine is an important constituent of the peptidoglycan layer. This Staphylococcus aureus (strain N315) protein is Alanine dehydrogenase 2 (ald2).